The sequence spans 444 residues: MLEGLSESLTQTMKKLAGMSIIDKKTLKDVTKDIQRALIQSDVNVKVVFGLTKKIEKRALEEELPKGLSPKEHVMRIVYQELVNLIGEKPEELKINRKPYKIMMLGLQGSGKTTTTAKLVKHLKKKGHTSAIVCTDTWRPAAYEQLRQLTEPLDVPVFGDPENKDAIDLAKKGLEKCGSKYDVILVDTAGRHKEEKDLLDEMAELSQIVQPDEVILVIDGTIGQQARSQAETFKKTTDIGSIIVSKLDGSAKGGGALSAVAEIRAPIKFIGTGERVDDFEAFDPERFISRLLGMGDLDTLIEKAAEVTSEKSDKEMIDSIISGKFTLKDMENQLEMMNKMGPIQQIMKLIPGLGNQLPANASKVTEEKLGMYKILMNSMTTYELENPEVIKKSRINRISRGAGLTNDDVKDLLKYYNVTKKALKGMGKRNMSGPMGKLMRHMQR.

Residues 106-113 (GLQGSGKT), 187-191 (DTAGR), and 245-248 (SKLD) contribute to the GTP site.

Belongs to the GTP-binding SRP family. SRP54 subfamily. In terms of assembly, part of the signal recognition particle protein translocation system, which is composed of SRP and FtsY. Archaeal SRP consists of a 7S RNA molecule of 300 nucleotides and two protein subunits: SRP54 and SRP19.

Its subcellular location is the cytoplasm. The catalysed reaction is GTP + H2O = GDP + phosphate + H(+). In terms of biological role, involved in targeting and insertion of nascent membrane proteins into the cytoplasmic membrane. Binds to the hydrophobic signal sequence of the ribosome-nascent chain (RNC) as it emerges from the ribosomes. The SRP-RNC complex is then targeted to the cytoplasmic membrane where it interacts with the SRP receptor FtsY. The polypeptide is Signal recognition particle 54 kDa protein (Methanosphaera stadtmanae (strain ATCC 43021 / DSM 3091 / JCM 11832 / MCB-3)).